Reading from the N-terminus, the 173-residue chain is Myeloid-derived growth factor (173 aa).

A signal peptide spans 1 to 31 (MAAPSGGWNGVGASLWAALLLGAVALRPAEA).

It belongs to the MYDGF family. Expressed in eosinophils (at protein level). Expressed in bone marrow cells. Expressed in synovial tissue. Found in synovial fluid of patients with arthropaties.

Its subcellular location is the secreted. The protein resides in the endoplasmic reticulum-Golgi intermediate compartment. It is found in the endoplasmic reticulum. The protein localises to the golgi apparatus. Functionally, bone marrow-derived monocyte and paracrine-acting protein that promotes cardiac myocyte survival and adaptive angiogenesis for cardiac protection and/or repair after myocardial infarction (MI). Stimulates endothelial cell proliferation through a MAPK1/3-, STAT3- and CCND1-mediated signaling pathway. Inhibits cardiac myocyte apoptosis in a PI3K/AKT-dependent signaling pathway. Involved in endothelial cell proliferation and angiogenesis. The sequence is that of Myeloid-derived growth factor from Homo sapiens (Human).